A 287-amino-acid chain; its full sequence is MIADKLFEKVEKNGVVCVGLDTSLDYIPEEFKSKFSNESDMLFAFNKEIIDATLDVSACFKVQIAYYEALGLKGLESYKNTLSYLREKNALIIADIKRGDIAATAKMYAKAHFEGDFESDFITLNPYMGMDSIDPYLPYIEKNEKGVFVLVRTSNKGAEDIEYLEAGHGKKVYDVVGEKLNTLGKNYLGKHGYSSIGGVVGCTHQEEAKEMRDKLDTMPFLIPGYGAQGGTAKDVAAYLKNGNGGIVNSSRKILLAYKAMEDSKNFAECARKEAISMRDSIREAILK.

K97 (proton donor) is an active-site residue.

Belongs to the OMP decarboxylase family. Type 2 subfamily.

The catalysed reaction is orotidine 5'-phosphate + H(+) = UMP + CO2. Its pathway is pyrimidine metabolism; UMP biosynthesis via de novo pathway; UMP from orotate: step 2/2. The chain is Orotidine 5'-phosphate decarboxylase from Clostridium perfringens (strain ATCC 13124 / DSM 756 / JCM 1290 / NCIMB 6125 / NCTC 8237 / Type A).